Here is a 211-residue protein sequence, read N- to C-terminus: ATP phosphoribosyltransferase (211 aa).

Belongs to the ATP phosphoribosyltransferase family. Short subfamily. In terms of assembly, heteromultimer composed of HisG and HisZ subunits.

It is found in the cytoplasm. The catalysed reaction is 1-(5-phospho-beta-D-ribosyl)-ATP + diphosphate = 5-phospho-alpha-D-ribose 1-diphosphate + ATP. Its pathway is amino-acid biosynthesis; L-histidine biosynthesis; L-histidine from 5-phospho-alpha-D-ribose 1-diphosphate: step 1/9. Functionally, catalyzes the condensation of ATP and 5-phosphoribose 1-diphosphate to form N'-(5'-phosphoribosyl)-ATP (PR-ATP). Has a crucial role in the pathway because the rate of histidine biosynthesis seems to be controlled primarily by regulation of HisG enzymatic activity. The sequence is that of ATP phosphoribosyltransferase from Pseudomonas syringae pv. tomato (strain ATCC BAA-871 / DC3000).